The primary structure comprises 137 residues: Large-conductance mechanosensitive channel (137 aa).

The next 3 helical transmembrane spans lie at 15–35 (VDLA…NSIV), 38–58 (IIMP…MFIQ), and 80–100 (GNFV…FLVV).

The protein belongs to the MscL family. In terms of assembly, homopentamer.

It is found in the cell inner membrane. In terms of biological role, channel that opens in response to stretch forces in the membrane lipid bilayer. May participate in the regulation of osmotic pressure changes within the cell. The polypeptide is Large-conductance mechanosensitive channel (Brucella anthropi (strain ATCC 49188 / DSM 6882 / CCUG 24695 / JCM 21032 / LMG 3331 / NBRC 15819 / NCTC 12168 / Alc 37) (Ochrobactrum anthropi)).